The sequence spans 262 residues: Ribosomal RNA small subunit methyltransferase A (262 aa).

S-adenosyl-L-methionine-binding residues include asparagine 14, leucine 16, glycine 41, glutamate 62, aspartate 87, and asparagine 109.

It belongs to the class I-like SAM-binding methyltransferase superfamily. rRNA adenine N(6)-methyltransferase family. RsmA subfamily.

It localises to the cytoplasm. The enzyme catalyses adenosine(1518)/adenosine(1519) in 16S rRNA + 4 S-adenosyl-L-methionine = N(6)-dimethyladenosine(1518)/N(6)-dimethyladenosine(1519) in 16S rRNA + 4 S-adenosyl-L-homocysteine + 4 H(+). Its function is as follows. Specifically dimethylates two adjacent adenosines (A1518 and A1519) in the loop of a conserved hairpin near the 3'-end of 16S rRNA in the 30S particle. May play a critical role in biogenesis of 30S subunits. The sequence is that of Ribosomal RNA small subunit methyltransferase A from Francisella tularensis subsp. tularensis (strain FSC 198).